We begin with the raw amino-acid sequence, 987 residues long: AP3-complex subunit beta-A (987 aa).

The tract at residues 586–662 (QDQLSDLDKQ…ISETSVSADQ (77 aa)) is disordered. The span at 603-613 (DGSEESSETGD) shows a compositional bias: acidic residues. Positions 614 to 631 (ENGSSDYDSESSNGSDFS) are enriched in low complexity.

The protein belongs to the adaptor complexes large subunit family. Adaptor protein complex 3 (AP-3) is a heterotetramer composed of two large adaptins (delta-type subunit and beta-type subunit), a medium adaptin (mu-type subunit) and a small adaptin (sigma-type subunit).

The protein resides in the cytoplasm. The protein localises to the golgi apparatus. Its subcellular location is the cytoplasmic vesicle membrane. Part of the AP-3 complex, an adaptor-related complex which seems to be clathrin-associated. The complex is associated with the Golgi region as well as more peripheral structures. It facilitates the budding of vesicles from the Golgi membrane and may be directly involved in trafficking to the vacuole. It also function in maintaining the identity of lytic vacuoles and in regulating the transition between storage and lytic vacuoles. This chain is AP3-complex subunit beta-A (AP3BA), found in Arabidopsis thaliana (Mouse-ear cress).